Here is a 273-residue protein sequence, read N- to C-terminus: Formamidopyrimidine-DNA glycosylase (273 aa).

The active-site Schiff-base intermediate with DNA is Pro-2. Glu-3 functions as the Proton donor in the catalytic mechanism. The active-site Proton donor; for beta-elimination activity is Lys-57. DNA contacts are provided by His-91, Arg-110, and Lys-151. Residues 236-270 form an FPG-type zinc finger; the sequence is QVYGRKGEACNDCGTIIEAKVIGQRNSYFCPHCQI. Arg-260 (proton donor; for delta-elimination activity) is an active-site residue.

It belongs to the FPG family. Monomer. Zn(2+) serves as cofactor.

The enzyme catalyses Hydrolysis of DNA containing ring-opened 7-methylguanine residues, releasing 2,6-diamino-4-hydroxy-5-(N-methyl)formamidopyrimidine.. The catalysed reaction is 2'-deoxyribonucleotide-(2'-deoxyribose 5'-phosphate)-2'-deoxyribonucleotide-DNA = a 3'-end 2'-deoxyribonucleotide-(2,3-dehydro-2,3-deoxyribose 5'-phosphate)-DNA + a 5'-end 5'-phospho-2'-deoxyribonucleoside-DNA + H(+). Functionally, involved in base excision repair of DNA damaged by oxidation or by mutagenic agents. Acts as a DNA glycosylase that recognizes and removes damaged bases. Has a preference for oxidized purines, such as 7,8-dihydro-8-oxoguanine (8-oxoG). Has AP (apurinic/apyrimidinic) lyase activity and introduces nicks in the DNA strand. Cleaves the DNA backbone by beta-delta elimination to generate a single-strand break at the site of the removed base with both 3'- and 5'-phosphates. This Actinobacillus pleuropneumoniae serotype 7 (strain AP76) protein is Formamidopyrimidine-DNA glycosylase.